The primary structure comprises 903 residues: Translation initiation factor IF-2 (903 aa).

2 disordered regions span residues 57 to 171 (EKFK…QRRR) and 267 to 318 (PTPQ…EAVT). The segment covering 69 to 163 (KKEAKEPSEK…SEPQKPKESL (95 aa)) has biased composition (basic and acidic residues). Over residues 267–278 (PTPQPMQKTKQP) the composition is skewed to low complexity. The segment covering 299-308 (RRARKKHKKP) has biased composition (basic residues). One can recognise a tr-type G domain in the interval 402–569 (PRAPVITIMG…IVLLQAEILE (168 aa)). The interval 411-418 (GHVDHGKT) is G1. 411–418 (GHVDHGKT) provides a ligand contact to GTP. The interval 436–440 (GITQH) is G2. A G3 region spans residues 457–460 (DTPG). GTP contacts are provided by residues 457–461 (DTPGH) and 511–514 (NKMD). The G4 stretch occupies residues 511–514 (NKMD). A G5 region spans residues 547-549 (SAK).

This sequence belongs to the TRAFAC class translation factor GTPase superfamily. Classic translation factor GTPase family. IF-2 subfamily.

It localises to the cytoplasm. One of the essential components for the initiation of protein synthesis. Protects formylmethionyl-tRNA from spontaneous hydrolysis and promotes its binding to the 30S ribosomal subunits. Also involved in the hydrolysis of GTP during the formation of the 70S ribosomal complex. This Campylobacter curvus (strain 525.92) protein is Translation initiation factor IF-2.